Here is a 285-residue protein sequence, read N- to C-terminus: Isoprenyl transferase 2 (285 aa).

The interval 11 to 30 (RREYRAPEPHPSGARAPKLP) is disordered. Residue D43 is part of the active site. D43 contributes to the Mg(2+) binding site. Residues 44 to 47 (GNGR), W48, R56, H60, and 88 to 90 (STE) contribute to the substrate site. The active-site Proton acceptor is the N91. Substrate is bound by residues W92, R94, R211, and 217–219 (RTS). Residue E230 coordinates Mg(2+).

The protein belongs to the UPP synthase family. Homodimer. Requires Mg(2+) as cofactor.

Catalyzes the condensation of isopentenyl diphosphate (IPP) with allylic pyrophosphates generating different type of terpenoids. This Streptomyces avermitilis (strain ATCC 31267 / DSM 46492 / JCM 5070 / NBRC 14893 / NCIMB 12804 / NRRL 8165 / MA-4680) protein is Isoprenyl transferase 2.